The primary structure comprises 299 residues: Adenylate kinase (299 aa).

Residues 1–30 (MATTTTRGARDSPFPAPSEGEIKKELNMKG) form a disordered region. 85–90 (GAGKGT) contributes to the ATP binding site. Residues 107–136 (ATGDMLREQVSKQTELGKMAKKIMDQGGLV) are NMP. AMP is bound by residues T108, R113, 134–136 (GLV), 163–166 (GFPR), and Q170. Positions 204–241 (GRLVHPASGRSYHKEFSPPKKPMTDDVTGEPLIQRSDD) are LID. ATP is bound by residues R205 and 214 to 215 (SY). The segment at 212-237 (GRSYHKEFSPPKKPMTDDVTGEPLIQ) is disordered. Positions 215–227 (YHKEFSPPKKPMT) are enriched in basic and acidic residues. AMP contacts are provided by R238 and R249. ATP is bound at residue Q277.

Belongs to the adenylate kinase family. AK2 subfamily. In terms of assembly, monomer.

It localises to the cytoplasm. It is found in the cytosol. The protein localises to the mitochondrion intermembrane space. It catalyses the reaction AMP + ATP = 2 ADP. In terms of biological role, catalyzes the reversible transfer of the terminal phosphate group between ATP and AMP. Plays an important role in cellular energy homeostasis and in adenine nucleotide metabolism. Adenylate kinase activity is critical for regulation of the phosphate utilization and the AMP de novo biosynthesis pathways. The sequence is that of Adenylate kinase from Mycosarcoma maydis (Corn smut fungus).